Consider the following 160-residue polypeptide: MARPRPATFDKVKTVAENRRARFDYFIEQTYEAGLVLTGTEVKSLRFGEGSIAEAYAEVKDEXVWLVNANIPEFSHGNRFNHEAKRPRKLLLHEREINKLHGAVAREGMTLVPLSVYFNGKGRAKVELALAKGKKTHDKRETIKERDWKREQSRILRDRG.

Residues 135–160 (KTHDKRETIKERDWKREQSRILRDRG) form a disordered region. The span at 138–160 (DKRETIKERDWKREQSRILRDRG) shows a compositional bias: basic and acidic residues.

It belongs to the SmpB family.

The protein resides in the cytoplasm. Functionally, required for rescue of stalled ribosomes mediated by trans-translation. Binds to transfer-messenger RNA (tmRNA), required for stable association of tmRNA with ribosomes. tmRNA and SmpB together mimic tRNA shape, replacing the anticodon stem-loop with SmpB. tmRNA is encoded by the ssrA gene; the 2 termini fold to resemble tRNA(Ala) and it encodes a 'tag peptide', a short internal open reading frame. During trans-translation Ala-aminoacylated tmRNA acts like a tRNA, entering the A-site of stalled ribosomes, displacing the stalled mRNA. The ribosome then switches to translate the ORF on the tmRNA; the nascent peptide is terminated with the 'tag peptide' encoded by the tmRNA and targeted for degradation. The ribosome is freed to recommence translation, which seems to be the essential function of trans-translation. The sequence is that of SsrA-binding protein from Sphingomonas elodea.